Reading from the N-terminus, the 180-residue chain is Large ribosomal subunit protein uL5 (180 aa).

This sequence belongs to the universal ribosomal protein uL5 family. As to quaternary structure, part of the 50S ribosomal subunit; part of the 5S rRNA/L5/L18/L25 subcomplex. Contacts the 5S rRNA and the P site tRNA. Forms a bridge to the 30S subunit in the 70S ribosome.

In terms of biological role, this is one of the proteins that bind and probably mediate the attachment of the 5S RNA into the large ribosomal subunit, where it forms part of the central protuberance. In the 70S ribosome it contacts protein S13 of the 30S subunit (bridge B1b), connecting the 2 subunits; this bridge is implicated in subunit movement. Contacts the P site tRNA; the 5S rRNA and some of its associated proteins might help stabilize positioning of ribosome-bound tRNAs. This Acholeplasma laidlawii (strain PG-8A) protein is Large ribosomal subunit protein uL5.